The primary structure comprises 467 residues: ADAM DEC1 (467 aa).

The N-terminal stretch at M1 to A33 is a signal peptide. The propeptide occupies T34–P208. Residues N61 and N236 are each glycosylated (N-linked (GlcNAc...) asparagine). A Peptidase M12B domain is found at K217 to P411. Cystine bridges form between C327-C406 and C368-C373. H351 is a Zn(2+) binding site. E352 is an active-site residue. Residues H355 and D361 each contribute to the Zn(2+) site. A Disintegrin domain is found at K418–E467.

Zn(2+) is required as a cofactor. Expressed highly in uterus during pregnancy.

It localises to the secreted. Its function is as follows. May play an important role in the control of the immune response and during pregnancy. This chain is ADAM DEC1 (Adamdec1), found in Mus musculus (Mouse).